We begin with the raw amino-acid sequence, 332 residues long: Small ribosomal subunit biogenesis GTPase RsgA (332 aa).

In terms of domain architecture, CP-type G spans Arg103 to Leu259. GTP contacts are provided by residues Thr148–Asp151 and Gly201–Thr209. Residues Cys281, Cys286, His288, and Cys294 each contribute to the Zn(2+) site.

It belongs to the TRAFAC class YlqF/YawG GTPase family. RsgA subfamily. In terms of assembly, monomer. Associates with 30S ribosomal subunit, binds 16S rRNA. It depends on Zn(2+) as a cofactor.

The protein resides in the cytoplasm. Functionally, one of several proteins that assist in the late maturation steps of the functional core of the 30S ribosomal subunit. Helps release RbfA from mature subunits. May play a role in the assembly of ribosomal proteins into the subunit. Circularly permuted GTPase that catalyzes slow GTP hydrolysis, GTPase activity is stimulated by the 30S ribosomal subunit. This Xylella fastidiosa (strain M12) protein is Small ribosomal subunit biogenesis GTPase RsgA.